A 185-amino-acid chain; its full sequence is Elongation factor P (185 aa).

Belongs to the elongation factor P family.

Its subcellular location is the cytoplasm. It functions in the pathway protein biosynthesis; polypeptide chain elongation. Its function is as follows. Involved in peptide bond synthesis. Stimulates efficient translation and peptide-bond synthesis on native or reconstituted 70S ribosomes in vitro. Probably functions indirectly by altering the affinity of the ribosome for aminoacyl-tRNA, thus increasing their reactivity as acceptors for peptidyl transferase. The protein is Elongation factor P of Staphylococcus saprophyticus subsp. saprophyticus (strain ATCC 15305 / DSM 20229 / NCIMB 8711 / NCTC 7292 / S-41).